The following is a 335-amino-acid chain: Acyl-CoA Delta(11) desaturase (335 aa).

3 consecutive transmembrane segments (helical) span residues 39–59, 64–84, and 98–118; these read LLTFGYWHIAGLYGLYLCFTS, TIILALILNEMAILGITAGAH, and LQIILIIFNSLSFQNSAIHWI. A Histidine box-1 motif is present at residues 84-89; it reads HRLWAH. The Histidine box-2 motif lies at 121 to 125; that stretch reads HRMHH. Helical transmembrane passes span 182-202 and 213-235; these read AIPFIGMICFVLPTIIPMYFW and TMLRYVFSLNSIFLVNSAAHLYG. A Histidine box-3 motif is present at residues 261 to 265; it reads HNYHH. The disordered stretch occupies residues 312-335; the sequence is MKRTGDGTDVSGQKYSCESSEVLQ. Residues 321–335 are compositionally biased toward polar residues; sequence VSGQKYSCESSEVLQ.

This sequence belongs to the fatty acid desaturase type 1 family. Fe cation serves as cofactor. Detected in pheromone gland.

It localises to the membrane. It catalyses the reaction an 11,12-saturated fatty acyl-CoA + 2 Fe(II)-[cytochrome b5] + O2 + 2 H(+) = an (11Z)-Delta(11)-fatty acyl-CoA + 2 Fe(III)-[cytochrome b5] + 2 H2O. Functionally, catalyzes the formation of Delta(11) fatty acyl precursors in the pheromone gland, with a preference for myristic acid. The sequence is that of Acyl-CoA Delta(11) desaturase from Choristoneura rosaceana (Oblique banded leafroller).